We begin with the raw amino-acid sequence, 258 residues long: MLAIISPAKTLDFESAVKNFPVSQPHFTDYSEQLIEVCRKLSPQDLSSLMSISDKLAGLNAARFAEWTKIHNENNSRPALFAFKGDVYTGLDADSLSEDDVIFAQSHLRMLSGLYGLLKPLDLMQPYRLEMGTKLANPKGKDLYAFWGNVITQAVQQAIDAQGDNVLVNLASDEYYKSVKENQLNAKIIKPVFLDNKNGKYKVISFYAKKARGLMCRYLIQHRLTNIEQLKEFDLAGYWFDSASSTETEFVFKRDINE.

Belongs to the UPF0246 family.

This chain is UPF0246 protein CGSHiGG_08495, found in Haemophilus influenzae (strain PittGG).